We begin with the raw amino-acid sequence, 174 residues long: MLHIKMTISTLLIALIVLLIIILVVFLYHKKQQPPKKVCKVDKDCGSGEHCVRGTCSSLSCLDAVKMDKRDVKMDSKISSCKFTPNFYHFTDTAAEQEFGKTWHSIKITPSPGESHTSQEICERYCLWGTDDCTGWEYFGDEKDGTCNVYTNPYLALKYTKDHVLYLPRNHKYA.

At 1–7 the chain is on the intravirion side; that stretch reads MLHIKMT. The helical transmembrane segment at 8–28 threads the bilayer; the sequence is ISTLLIALIVLLIIILVVFLY. The Virion surface segment spans residues 29–174; it reads HKKQQPPKKV…LYLPRNHKYA (146 aa).

This sequence belongs to the asfivirus inner membrane protein p22 family.

The protein resides in the virion membrane. The protein localises to the host cell membrane. This African swine fever virus (isolate Pig/Kenya/KEN-50/1950) (ASFV) protein is Inner membrane protein p22.